Here is a 429-residue protein sequence, read N- to C-terminus: Glutamyl-tRNA reductase (429 aa).

Residues threonine 56–arginine 59, serine 119, glutamate 124–glutamine 126, and glutamine 130 each bind substrate. The active-site Nucleophile is the cysteine 57. Residue glycine 199–isoleucine 204 participates in NADP(+) binding.

Belongs to the glutamyl-tRNA reductase family. In terms of assembly, homodimer.

The catalysed reaction is (S)-4-amino-5-oxopentanoate + tRNA(Glu) + NADP(+) = L-glutamyl-tRNA(Glu) + NADPH + H(+). Its pathway is porphyrin-containing compound metabolism; protoporphyrin-IX biosynthesis; 5-aminolevulinate from L-glutamyl-tRNA(Glu): step 1/2. Catalyzes the NADPH-dependent reduction of glutamyl-tRNA(Glu) to glutamate 1-semialdehyde (GSA). The protein is Glutamyl-tRNA reductase of Janthinobacterium sp. (strain Marseille) (Minibacterium massiliensis).